A 504-amino-acid chain; its full sequence is FAD-dependent monooxygenase nsrK (504 aa).

FAD is bound at residue Arg146. The active site involves Arg227. Residues Asp340 and Gly353 each contribute to the FAD site.

The protein belongs to the paxM FAD-dependent monooxygenase family. Requires FAD as cofactor.

Its pathway is secondary metabolite biosynthesis. Its function is as follows. FAD-dependent monooxygenase; part of the gene cluster that mediates the biosynthesis of the tetrahydroxanthone dimer neosartorin, which exhibits antibacterial activity. The two different monomeric units appear to be synthesized by the same set of enzymes, among which the Baeyer-Villiger monooxygenase nsrF is the key enzyme for the divergence of the biosynthetic routes. The pathway begins with the synthesis of atrochrysone thioester by the polyketide synthase nsrB. The atrochrysone carboxyl ACP thioesterase nsrC then breaks the thioester bond and releases the atrochrysone carboxylic acid from AacuL. Atrochrysone carboxylic acid is decarboxylated by the decarboxylase nsrE, and oxidized by the anthrone oxygenase nsrD to yield emodin. Emodin is then reduced to emodin hydroquinone by the oxidoreductase nsrR. A-ring reduction by the short chain dehydrogenase nsrJ, dehydration by the scytalone dehydratase-like protein nsrI and probable spontaneous re-oxidation, results in overall deoxygenation to chrysophanol. The Baeyer-Villiger monooxygenase nsrF accepts chrysophanol as a substrate to insert one oxygen atom at two different positions to yield the precursors of both monomric units. NsrF is promiscuous/flexible in interacting with the 2 (non methylated and methylated) aromatic rings of chrysophanol, thus diverging the biosynthetic pathway at this point. After the hydrolysis of the lactones, methylesterification by the methyltransferase nsrG yields respectively moniliphenone and 2,2',6'-trihydroxy-4-methyl-6-methoxya-cyldiphenylmethanone. The next steps are the hydroxylation by the FAD-dependent monooxygenase nsrK, followed by isomerization by the monooxygenase nsrQ. The short chain dehydrogenase/reductase nsrO then catalyzes the C-5 ketoreduction to give the xanthone skeleton of blennolide C and 5-acetylblennolide A. The acetyltransferase nsrL has a strict substrate specificity and uses only blennolide A but not blennolide C to yield 5-acetylblennolide A as the single-acetylated product. In the final step of the biosynthesis, the heterodimerization of the 2 xanthones, blennolide C and 5-acetylblennolide A, is catalyzed by the cytochrome P450 monooxygenase nsrP. NsrP can utilize at least three different xanthones as its substrates to perform the dimerization reaction. The protein is FAD-dependent monooxygenase nsrK of Aspergillus novofumigatus (strain IBT 16806).